The sequence spans 1154 residues: DNA-directed RNA polymerase subunit beta' (1154 aa).

Residues C60, C62, C75, and C78 each coordinate Zn(2+). Mg(2+)-binding residues include D449, D451, and D453. Zn(2+)-binding residues include C774, C848, C855, and C858.

This sequence belongs to the RNA polymerase beta' chain family. As to quaternary structure, the RNAP catalytic core consists of 2 alpha, 1 beta, 1 beta' and 1 omega subunit. When a sigma factor is associated with the core the holoenzyme is formed, which can initiate transcription. The cofactor is Mg(2+). Zn(2+) is required as a cofactor.

It catalyses the reaction RNA(n) + a ribonucleoside 5'-triphosphate = RNA(n+1) + diphosphate. Its function is as follows. DNA-dependent RNA polymerase catalyzes the transcription of DNA into RNA using the four ribonucleoside triphosphates as substrates. This is DNA-directed RNA polymerase subunit beta' from Desulforudis audaxviator (strain MP104C).